A 325-amino-acid polypeptide reads, in one-letter code: MAAEDFALPADHNPLDTDLLNVFCWVAKTQSFSRAAAELGTSQPVITRKIGRLEECLGVALFVRSNRGCVLTAAGTVLIGKAPSILLQLAEIKEEVSHSASVVSGSLSMGITHAASTVMAPRLLPVIARRWPKLQVDVMEALSRTLVERVLHGELALAVLFDPPPHPDLICRPLLIERLCLVGNPQSDLRTMAPPTIRDLARLPLMLPSGGQIIRNLLEDAFAEINEPLKPVYEAASMAMLREMAVQGIGYTLLTQGGVAEDVAAGKLIAQALPDKGMVVTLTLITKRESTRLRNVRLLSDFVASEIRAVARQGQWPGHPTVVGG.

The region spanning 15-72 is the HTH lysR-type domain; that stretch reads LDTDLLNVFCWVAKTQSFSRAAAELGTSQPVITRKIGRLEECLGVALFVRSNRGCVLT. Residues 32-51 constitute a DNA-binding region (H-T-H motif); the sequence is FSRAAAELGTSQPVITRKIG.

Belongs to the LysR transcriptional regulatory family.

The protein is HTH-type transcriptional regulator BbuR (bbuR) of Bordetella bronchiseptica (strain ATCC BAA-588 / NCTC 13252 / RB50) (Alcaligenes bronchisepticus).